Consider the following 96-residue polypeptide: Aspartyl/glutamyl-tRNA(Asn/Gln) amidotransferase subunit C (96 aa).

It belongs to the GatC family. In terms of assembly, heterotrimer of A, B and C subunits.

The enzyme catalyses L-glutamyl-tRNA(Gln) + L-glutamine + ATP + H2O = L-glutaminyl-tRNA(Gln) + L-glutamate + ADP + phosphate + H(+). It catalyses the reaction L-aspartyl-tRNA(Asn) + L-glutamine + ATP + H2O = L-asparaginyl-tRNA(Asn) + L-glutamate + ADP + phosphate + 2 H(+). In terms of biological role, allows the formation of correctly charged Asn-tRNA(Asn) or Gln-tRNA(Gln) through the transamidation of misacylated Asp-tRNA(Asn) or Glu-tRNA(Gln) in organisms which lack either or both of asparaginyl-tRNA or glutaminyl-tRNA synthetases. The reaction takes place in the presence of glutamine and ATP through an activated phospho-Asp-tRNA(Asn) or phospho-Glu-tRNA(Gln). In Bacillus cytotoxicus (strain DSM 22905 / CIP 110041 / 391-98 / NVH 391-98), this protein is Aspartyl/glutamyl-tRNA(Asn/Gln) amidotransferase subunit C.